The following is a 609-amino-acid chain: uncharacterized protein (609 aa).

It belongs to the NodU/CmcH family.

This is an uncharacterized protein from Methanocaldococcus jannaschii (strain ATCC 43067 / DSM 2661 / JAL-1 / JCM 10045 / NBRC 100440) (Methanococcus jannaschii).